The primary structure comprises 320 residues: 33 kDa chaperonin (320 aa).

Basic and acidic residues predominate over residues 1-17 (MTDASGSERLKRTKDIS). The disordered stretch occupies residues 1-27 (MTDASGSERLKRTKDISESTPPSSLPD). Intrachain disulfides connect Cys262–Cys264 and Cys295–Cys298.

This sequence belongs to the HSP33 family. Post-translationally, under oxidizing conditions two disulfide bonds are formed involving the reactive cysteines. Under reducing conditions zinc is bound to the reactive cysteines and the protein is inactive.

The protein resides in the cytoplasm. Redox regulated molecular chaperone. Protects both thermally unfolding and oxidatively damaged proteins from irreversible aggregation. Plays an important role in the bacterial defense system toward oxidative stress. In Synechococcus sp. (strain JA-3-3Ab) (Cyanobacteria bacterium Yellowstone A-Prime), this protein is 33 kDa chaperonin.